A 740-amino-acid chain; its full sequence is Phosphoribosylformylglycinamidine synthase subunit PurL (740 aa).

The active site involves histidine 50. ATP contacts are provided by tyrosine 53 and lysine 92. Residue glutamate 94 participates in Mg(2+) binding. Substrate contacts are provided by residues 95-98 (SHNH) and arginine 117. Histidine 96 acts as the Proton acceptor in catalysis. Aspartate 118 contacts Mg(2+). A substrate-binding site is contributed by glutamine 241. Aspartate 269 serves as a coordination point for Mg(2+). 313–315 (ESQ) lines the substrate pocket. Positions 495 and 532 each coordinate ATP. A Mg(2+)-binding site is contributed by asparagine 533. Serine 535 serves as a coordination point for substrate.

This sequence belongs to the FGAMS family. As to quaternary structure, monomer. Part of the FGAM synthase complex composed of 1 PurL, 1 PurQ and 2 PurS subunits.

Its subcellular location is the cytoplasm. It catalyses the reaction N(2)-formyl-N(1)-(5-phospho-beta-D-ribosyl)glycinamide + L-glutamine + ATP + H2O = 2-formamido-N(1)-(5-O-phospho-beta-D-ribosyl)acetamidine + L-glutamate + ADP + phosphate + H(+). It functions in the pathway purine metabolism; IMP biosynthesis via de novo pathway; 5-amino-1-(5-phospho-D-ribosyl)imidazole from N(2)-formyl-N(1)-(5-phospho-D-ribosyl)glycinamide: step 1/2. In terms of biological role, part of the phosphoribosylformylglycinamidine synthase complex involved in the purines biosynthetic pathway. Catalyzes the ATP-dependent conversion of formylglycinamide ribonucleotide (FGAR) and glutamine to yield formylglycinamidine ribonucleotide (FGAM) and glutamate. The FGAM synthase complex is composed of three subunits. PurQ produces an ammonia molecule by converting glutamine to glutamate. PurL transfers the ammonia molecule to FGAR to form FGAM in an ATP-dependent manner. PurS interacts with PurQ and PurL and is thought to assist in the transfer of the ammonia molecule from PurQ to PurL. This chain is Phosphoribosylformylglycinamidine synthase subunit PurL, found in Brucella canis (strain ATCC 23365 / NCTC 10854 / RM-666).